We begin with the raw amino-acid sequence, 217 residues long: MIPLEHPILLESFAHIDRSVGPHNLSSQEYAIARRVIHSTADFDFLHLLRFAPDLPQAEFDPDLPEHQAIARGIESLRHGQTIVVDVNMVKQGIQGLVQRTFNNPIQTAIDFATIADPGKTRTETGMDRCIAQFPEAIYVIGNAPTALLTLCQAIAAGKAKPALVIGVPVGFIGVLEAKKALSLLPCPQIRVEGNKGGSPVAAGIVNALLMLAWREG.

Substrate-binding residues include S12 and R35. Catalysis depends on H38, which acts as the Proton donor/acceptor.

Belongs to the CobH/CbiC family. Homodimer.

It catalyses the reaction Co-precorrin-8X = cob(II)yrinate. It participates in cofactor biosynthesis; adenosylcobalamin biosynthesis; cob(II)yrinate a,c-diamide from sirohydrochlorin (anaerobic route): step 9/10. Functionally, catalyzes the conversion of cobalt-precorrin-8 to cobyrinate. This chain is Cobalt-precorrin-8 methylmutase (cbiC), found in Synechocystis sp. (strain ATCC 27184 / PCC 6803 / Kazusa).